A 405-amino-acid chain; its full sequence is Corticosteroid-binding globulin (405 aa).

The signal sequence occupies residues 1–22 (MPLLLYTCLLWLSTSGLWTVQA). N-linked (GlcNAc...) asparagine glycosylation is found at Asn-26, Asn-31, Asn-96, and Asn-260. Residue Asn-286 participates in cortisol binding. Residues Asn-330 and Asn-369 are each glycosylated (N-linked (GlcNAc...) asparagine). Cortisol is bound at residue Trp-393.

Belongs to the serpin family. As to expression, expressed by the liver; secreted in plasma.

It localises to the secreted. In terms of biological role, major transport protein for glucocorticoids and progestins in the blood of almost all vertebrate species. In Pongo abelii (Sumatran orangutan), this protein is Corticosteroid-binding globulin (SERPINA6).